Consider the following 398-residue polypeptide: Flavohemoprotein (398 aa).

A Globin domain is found at 9-147; that stretch reads QLTPAQIKII…LAKLLIDLEA (139 aa). A heme b-binding site is contributed by His93. Residues Tyr103 and Glu146 each act as charge relay system in the active site. The tract at residues 155–398 is reductase; the sequence is WRWFKDFKVT…KLEYFGPYDP (244 aa). One can recognise an FAD-binding FR-type domain in the interval 156-263; the sequence is RWFKDFKVTR…APPAGNFVYD (108 aa). FAD contacts are provided by residues Tyr196 and 212 to 215; that span reads REYS. NADP(+) is bound at residue 276–281; that stretch reads GIGITP. 395-398 provides a ligand contact to FAD; it reads PYDP.

This sequence belongs to the globin family. FAD serves as cofactor. The cofactor is heme b.

It localises to the cytoplasm. The enzyme catalyses 2 nitric oxide + NADPH + 2 O2 = 2 nitrate + NADP(+) + H(+). It catalyses the reaction 2 nitric oxide + NADH + 2 O2 = 2 nitrate + NAD(+) + H(+). Its activity is regulated as follows. Inhibited by imidazoles. Nitric oxide dioxygenase involved in NO detoxification in an aerobic process, termed nitric oxide dioxygenase (NOD) reaction that utilizes O(2) and NAD(P)H to convert NO to nitrate, which protects the fungus from various noxious nitrogen compounds. Therefore, plays a central role in the inducible response to nitrosative stress. Plays a role in virulence since nitric oxide is generated by macrophages of the host immune system. In Candida albicans (strain SC5314 / ATCC MYA-2876) (Yeast), this protein is Flavohemoprotein (YHB1).